Reading from the N-terminus, the 126-residue chain is Muscarinic acetylcholine receptor M4 (126 aa).

A disordered region spans residues 1–90 (MKQSVKKPPP…LQPRTLNPAS (90 aa)). Residues 1–126 (MKQSVKKPPP…PAGMRPAANV (126 aa)) are Cytoplasmic-facing. A compositionally biased stretch (pro residues) spans 28 to 39 (APPPVLPPPPRP). Polar residues predominate over residues 47 to 57 (NESSSGSATQN). The span at 64–75 (TELSTTEATTPA) shows a compositional bias: low complexity.

Belongs to the G-protein coupled receptor 1 family. Muscarinic acetylcholine receptor subfamily. CHRM4 sub-subfamily.

It is found in the cell membrane. Its subcellular location is the postsynaptic cell membrane. In terms of biological role, the muscarinic acetylcholine receptor mediates various cellular responses, including inhibition of adenylate cyclase, breakdown of phosphoinositides and modulation of potassium channels through the action of G proteins. Primary transducing effect is inhibition of adenylate cyclase. May couple to multiple functional responses in cell lines. This is Muscarinic acetylcholine receptor M4 (CHRM4) from Bos taurus (Bovine).